Here is a 219-residue protein sequence, read N- to C-terminus: Regulatory protein YeiL (219 aa).

Positions 19-97 (RLFHFLARDY…IEECWCLALP (79 aa)) are sensory domain. Positions 68, 91, 93, and 116 each coordinate [4Fe-4S] cluster. A dimer interface region spans residues 111–131 (FLRKLCVTLSHKNYRNIVSLT). The HTH crp-type domain occupies 136-199 (FPLVNRLAAF…KKGYLIKNRK (64 aa)). The H-T-H motif DNA-binding region spans 158–181 (KHTQAAEYLGVSYRHLLYVLAQFI).

Homodimer. [4Fe-4S] cluster is required as a cofactor.

Its subcellular location is the cytoplasm. Transcription regulator involved in mid-term, stationary-phase viability under nitrogen starvation. Might control expression of the salvage pathways or in some other way repress the recycling of nucleobases to nucleic acids and enhance their use as general nitrogen sources during nitrogen-limited growth. This Escherichia coli O157:H7 protein is Regulatory protein YeiL (yeiL).